Consider the following 204-residue polypeptide: Protein GrpE (204 aa).

Residues 1 to 12 (MSNQEKKMHEEE) are compositionally biased toward basic and acidic residues. Residues 1 to 37 (MSNQEKKMHEEELQQQETVEADTEAEAEAVGTDADIE) are disordered.

It belongs to the GrpE family. As to quaternary structure, homodimer.

It localises to the cytoplasm. In terms of biological role, participates actively in the response to hyperosmotic and heat shock by preventing the aggregation of stress-denatured proteins, in association with DnaK and GrpE. It is the nucleotide exchange factor for DnaK and may function as a thermosensor. Unfolded proteins bind initially to DnaJ; upon interaction with the DnaJ-bound protein, DnaK hydrolyzes its bound ATP, resulting in the formation of a stable complex. GrpE releases ADP from DnaK; ATP binding to DnaK triggers the release of the substrate protein, thus completing the reaction cycle. Several rounds of ATP-dependent interactions between DnaJ, DnaK and GrpE are required for fully efficient folding. In Vibrio proteolyticus (Aeromonas proteolytica), this protein is Protein GrpE.